We begin with the raw amino-acid sequence, 274 residues long: Small nuclear ribonucleoprotein-associated protein B (274 aa).

One can recognise a Sm domain in the interval 5 to 85 (PKSSKMLQYI…VVSMSVEAPP (81 aa)). Residues 148–274 (PGGGVPPPMG…PMGRGGFQRK (127 aa)) form a disordered region. Repeat unit 1 spans residues 162–171 (PPQGFPPGGP). A 6 X 10 AA repeats of P-P-Q-G-F-P-P-G-G-P region spans residues 162–265 (PPQGFPPGGP…PPQGFPPGGP (104 aa)). Positions 173-187 (PQGAFNNNPNNNNGG) are enriched in low complexity. 5 tandem repeats follow at residues 188–197 (PPQGFPPGGP), 204–213 (PPQGFPPGGP), 225–234 (PPQGFPPGGP), 241–250 (PPQGFPPGGP), and 256–265 (PPQGFPPGGP). Residues 216–226 (GPNLNNGNMPP) show a composition bias toward low complexity. Residues 265–274 (PMGRGGFQRK) are compositionally biased toward gly residues.

The protein belongs to the snRNP SmB/SmN family.

It localises to the cytoplasm. It is found in the cytosol. The protein resides in the nucleus. Functionally, plays a role in pre-mRNA splicing as a core component of the spliceosomal U1, U2, U4 and U5 small nuclear ribonucleoproteins (snRNPs), the building blocks of the spliceosome. This Dictyostelium discoideum (Social amoeba) protein is Small nuclear ribonucleoprotein-associated protein B (snrpb).